Reading from the N-terminus, the 675-residue chain is Probable potassium transport system protein Kup (675 aa).

The next 12 helical transmembrane spans lie at 12-32 (LGML…PLYV), 55-75 (VSLI…LVAL), 98-118 (WLIF…TLTP), 143-163 (WLVP…QVLG), 170-190 (SFGP…LLNI), 216-236 (MGIF…ALYS), 249-269 (TWPF…AWML), 296-316 (IAMI…LITG), 345-365 (IYIG…VWLF), 374-394 (AYGL…SQWV), 401-421 (FWSL…LVAS), and 428-448 (GGYL…VWFF).

The protein belongs to the HAK/KUP transporter (TC 2.A.72) family.

The protein resides in the cell membrane. It carries out the reaction K(+)(in) + H(+)(in) = K(+)(out) + H(+)(out). Transport of potassium into the cell. Likely operates as a K(+):H(+) symporter. This chain is Probable potassium transport system protein Kup, found in Levilactobacillus brevis (strain ATCC 367 / BCRC 12310 / CIP 105137 / JCM 1170 / LMG 11437 / NCIMB 947 / NCTC 947) (Lactobacillus brevis).